Reading from the N-terminus, the 318-residue chain is MNYQVLLYYKYTTIDDPEQFAQDHLAFCKAHHLKGRILVSTEGINGTLSGTKEETEQYMAHMHADERFKDMVFKIDEAEGHAFKKMHVRPRKEIVALDLEDDVDPRHTTGQYLSPVEFRKALEDDDTVIIDARNDYEFDLGHFRGAIRPDITRFRDLPDWIKENKALFTDKKVVTYCTGGIRCEKFSGWLLKEGFEDVAQLHGGIATYGKDPETKGQYWDGKMYVFDDRISVDINQVEKTIIGKDWFDGKPCERYINCANPECNKQILVSEENETKYLGACSYECAKHERNRYVQANNISDNEWQQRLTNFDDLHQHA.

Positions 123–217 (EDDDTVIIDA…YGKDPETKGQ (95 aa)) constitute a Rhodanese domain. The Cysteine persulfide intermediate role is filled by cysteine 177.

Belongs to the TrhO family.

The catalysed reaction is uridine(34) in tRNA + AH2 + O2 = 5-hydroxyuridine(34) in tRNA + A + H2O. Catalyzes oxygen-dependent 5-hydroxyuridine (ho5U) modification at position 34 in tRNAs. This chain is tRNA uridine(34) hydroxylase, found in Staphylococcus aureus (strain Mu3 / ATCC 700698).